We begin with the raw amino-acid sequence, 353 residues long: Thrombopoietin (353 aa).

Residues 1–21 (MELTELLLVVMLLLTARLTLS) form the signal peptide. A glycan (O-linked (GalNAc...) serine) is linked at Ser22. 2 cysteine pairs are disulfide-bonded: Cys28–Cys172 and Cys50–Cys106. 4 O-linked (GalNAc...) threonine glycosylation sites follow: Thr58, Thr131, Thr179, and Thr180. O-linked (GalNAc...) serine glycosylation is present at Ser184. N-linked (GlcNAc...) (complex) asparagine glycosylation is found at Asn197 and Asn206. A glycan (O-linked (GalNAc...) threonine) is linked at Thr213. N-linked (GlcNAc...) (complex) asparagine glycosylation is found at Asn234 and Asn255. The segment at 257–353 (TRGLFPGPSR…THSQNLSQEG (97 aa)) is disordered. Ser265 carries O-linked (GalNAc...) serine glycosylation. Residues 275-304 (SSGTSDTGSLPPNLQPGYSPSPTHPPTGQY) show a composition bias toward polar residues. The segment covering 324–335 (LPDPSAPTPTPT) has biased composition (pro residues). N-linked (GlcNAc...) asparagine glycans are attached at residues Asn340 and Asn348. Residues 343-353 (YTHSQNLSQEG) are compositionally biased toward polar residues.

The protein belongs to the EPO/TPO family. Interacts with MPL/TPOR.

Its subcellular location is the secreted. Lineage-specific cytokine affecting the proliferation and maturation of megakaryocytes from their committed progenitor cells. It acts at a late stage of megakaryocyte development. It may be the major physiological regulator of circulating platelets. In Homo sapiens (Human), this protein is Thrombopoietin (THPO).